Here is a 212-residue protein sequence, read N- to C-terminus: Octanoyltransferase (212 aa).

Positions 31-209 (AETQDEIWLV…HFADLLGYNI (179 aa)) constitute a BPL/LPL catalytic domain. Residues 70 to 77 (RGGQITYH), 138 to 140 (SLG), and 151 to 153 (GLA) each bind substrate. Residue Cys-169 is the Acyl-thioester intermediate of the active site.

Belongs to the LipB family.

It is found in the cytoplasm. It catalyses the reaction octanoyl-[ACP] + L-lysyl-[protein] = N(6)-octanoyl-L-lysyl-[protein] + holo-[ACP] + H(+). It functions in the pathway protein modification; protein lipoylation via endogenous pathway; protein N(6)-(lipoyl)lysine from octanoyl-[acyl-carrier-protein]: step 1/2. In terms of biological role, catalyzes the transfer of endogenously produced octanoic acid from octanoyl-acyl-carrier-protein onto the lipoyl domains of lipoate-dependent enzymes. Lipoyl-ACP can also act as a substrate although octanoyl-ACP is likely to be the physiological substrate. This chain is Octanoyltransferase, found in Haemophilus influenzae (strain PittGG).